The chain runs to 495 residues: Catalase B (495 aa).

Residues 1 to 25 (MSNNKKLTSLFGAPVSDRENSMTAG) form a disordered region. Residues His55 and Asn128 contribute to the active site. Tyr338 contacts heme.

Belongs to the catalase family. In terms of assembly, homodimer. Heme serves as cofactor.

It carries out the reaction 2 H2O2 = O2 + 2 H2O. Its function is as follows. Decomposes hydrogen peroxide into water and oxygen; serves to protect cells from the toxic effects of hydrogen peroxide. The polypeptide is Catalase B (katB) (Staphylococcus xylosus).